The following is a 334-amino-acid chain: Sulfhydrogenase 2 subunit beta (334 aa).

4Fe-4S ferredoxin-type domains lie at 220–250 (KVWKKYAEKCLGCGNCTIVCPTCRCYEVCDT) and 294–328 (CKNYFDPEAGFNCVGCGRCDEFCPARIEHVKVLDE). [4Fe-4S] cluster contacts are provided by Cys229, Cys232, Cys235, Cys239, Cys306, Cys309, Cys312, and Cys316.

In terms of assembly, dimer of heterotetramer of alpha, beta, gamma and delta subunits. The nickel-containing alpha and delta subunits constitute the hydrogenase activity. The beta and gamma subunits (flavin-containing dimer) constitute the sulfur reductase activity. [4Fe-4S] cluster serves as cofactor.

Its subcellular location is the cytoplasm. It catalyses the reaction n sulfur + H2 = (n-1) sulfur + hydrogen sulfide + H(+). Its function is as follows. Part of a bifunctional enzyme complex that functions as a hydrogen-evolving hydrogenase with sulfur-reducing activity. May play a role in hydrogen cycling during fermentative growth. Activity exhibited with NAD in addition to NADPH. The beta and gamma subunits form the sulfur-reducing component that catalyzes the cytoplasmic production of hydrogen sulfide in the presence of elemental sulfur. This Pyrococcus furiosus (strain ATCC 43587 / DSM 3638 / JCM 8422 / Vc1) protein is Sulfhydrogenase 2 subunit beta.